A 195-amino-acid polypeptide reads, in one-letter code: Molybdenum cofactor guanylyltransferase (195 aa).

GTP contacts are provided by residues 10-12 (LAG), K23, N51, D69, and D99. D99 contacts Mg(2+).

This sequence belongs to the MobA family. As to quaternary structure, monomer. It depends on Mg(2+) as a cofactor.

The protein resides in the cytoplasm. It catalyses the reaction Mo-molybdopterin + GTP + H(+) = Mo-molybdopterin guanine dinucleotide + diphosphate. Its function is as follows. Transfers a GMP moiety from GTP to Mo-molybdopterin (Mo-MPT) cofactor (Moco or molybdenum cofactor) to form Mo-molybdopterin guanine dinucleotide (Mo-MGD) cofactor. In Yersinia pestis bv. Antiqua (strain Antiqua), this protein is Molybdenum cofactor guanylyltransferase.